A 267-amino-acid polypeptide reads, in one-letter code: Imidazole glycerol phosphate synthase subunit HisF (267 aa).

Catalysis depends on residues aspartate 21 and aspartate 140.

Belongs to the HisA/HisF family. Heterodimer of HisH and HisF.

The protein resides in the cytoplasm. The enzyme catalyses 5-[(5-phospho-1-deoxy-D-ribulos-1-ylimino)methylamino]-1-(5-phospho-beta-D-ribosyl)imidazole-4-carboxamide + L-glutamine = D-erythro-1-(imidazol-4-yl)glycerol 3-phosphate + 5-amino-1-(5-phospho-beta-D-ribosyl)imidazole-4-carboxamide + L-glutamate + H(+). It functions in the pathway amino-acid biosynthesis; L-histidine biosynthesis; L-histidine from 5-phospho-alpha-D-ribose 1-diphosphate: step 5/9. Its function is as follows. IGPS catalyzes the conversion of PRFAR and glutamine to IGP, AICAR and glutamate. The HisF subunit catalyzes the cyclization activity that produces IGP and AICAR from PRFAR using the ammonia provided by the HisH subunit. This Bordetella avium (strain 197N) protein is Imidazole glycerol phosphate synthase subunit HisF.